The primary structure comprises 224 residues: Glycerol-3-phosphate acyltransferase (224 aa).

6 consecutive transmembrane segments (helical) span residues 3 to 23 (IFLSIAINILIFWIGYLIGSL), 54 to 74 (VFGYKVAIVILFIDIFKVVFA), 90 to 112 (LYFYIPLIAGLAAQIGQAYPIYF), 127 to 147 (LISINVLLWPIAGVFFFLLLF), 152 to 172 (VSLSSLLTTLIMIGFISIPWM), and 183 to 203 (GFGQFWVNIIIYLFAAALIFW).

It belongs to the PlsY family. In terms of assembly, probably interacts with PlsX.

The protein localises to the cell membrane. The catalysed reaction is an acyl phosphate + sn-glycerol 3-phosphate = a 1-acyl-sn-glycero-3-phosphate + phosphate. Its pathway is lipid metabolism; phospholipid metabolism. In terms of biological role, catalyzes the transfer of an acyl group from acyl-phosphate (acyl-PO(4)) to glycerol-3-phosphate (G3P) to form lysophosphatidic acid (LPA). This enzyme utilizes acyl-phosphate as fatty acyl donor, but not acyl-CoA or acyl-ACP. This is Glycerol-3-phosphate acyltransferase from Mycoplasmopsis synoviae (strain 53) (Mycoplasma synoviae).